A 395-amino-acid chain; its full sequence is Nitrite extrusion protein (395 aa).

A run of 12 helical transmembrane segments spans residues 15–35 (SLVAGFMVWVLISSLISQITL), 44–64 (ISLVTAIPVILGSLLRIPLGY), 73–93 (LMFMVSFILLLFPVFWISIAD), 96–116 (FDLIAGGFFLGIGGAVFSIGV), 133–153 (GIYGAGNIGTAVTTFAAPVIA), 160–180 (STVQMYLILLAVFALLHVLFG), 203–223 (VLWFLSLFYFITFGAFVAFTI), 240–262 (AGLRTAGFIAVSTLLRPAGGFLA), 271–291 (LMFVFAGLTLSGIILSFSPTI), 293–313 (LYTFGSLTVAVCSGIGNGTVF), 330–350 (IVSAMGGLGGFFPPLILASVF), and 357–377 (AIGFMALSEVALASFVLVIWM).

Belongs to the major facilitator superfamily. Nitrate/nitrite porter (TC 2.A.1.8) family.

Its subcellular location is the cell membrane. In terms of biological role, involved in excretion of nitrite produced by the dissimilatory reduction of nitrate. The protein is Nitrite extrusion protein (narK) of Bacillus subtilis (strain 168).